Reading from the N-terminus, the 189-residue chain is Xanthine phosphoribosyltransferase (189 aa).

L20 and N27 together coordinate xanthine. 128–132 serves as a coordination point for 5-phospho-alpha-D-ribose 1-diphosphate; it reads ANGKA. A xanthine-binding site is contributed by K156.

This sequence belongs to the purine/pyrimidine phosphoribosyltransferase family. Xpt subfamily. As to quaternary structure, homodimer.

The protein localises to the cytoplasm. It carries out the reaction XMP + diphosphate = xanthine + 5-phospho-alpha-D-ribose 1-diphosphate. It functions in the pathway purine metabolism; XMP biosynthesis via salvage pathway; XMP from xanthine: step 1/1. Functionally, converts the preformed base xanthine, a product of nucleic acid breakdown, to xanthosine 5'-monophosphate (XMP), so it can be reused for RNA or DNA synthesis. This Pseudomonas savastanoi pv. phaseolicola (strain 1448A / Race 6) (Pseudomonas syringae pv. phaseolicola (strain 1448A / Race 6)) protein is Xanthine phosphoribosyltransferase.